A 660-amino-acid chain; its full sequence is Acetyl-coenzyme A synthetase (660 aa).

CoA is bound by residues 197 to 200 (RGGK) and Thr-317. Residues 397–399 (GEP), 421–426 (DTFWQT), Asp-512, and Arg-528 contribute to the ATP site. Ser-536 is a CoA binding site. Arg-539 provides a ligand contact to ATP. Mg(2+) is bound by residues Val-550 and Val-555. The residue at position 625 (Lys-625) is an N6-acetyllysine.

It belongs to the ATP-dependent AMP-binding enzyme family. Mg(2+) is required as a cofactor. Post-translationally, acetylated. Deacetylation by the SIR2-homolog deacetylase activates the enzyme.

The catalysed reaction is acetate + ATP + CoA = acetyl-CoA + AMP + diphosphate. Its function is as follows. Catalyzes the conversion of acetate into acetyl-CoA (AcCoA), an essential intermediate at the junction of anabolic and catabolic pathways. AcsA undergoes a two-step reaction. In the first half reaction, AcsA combines acetate with ATP to form acetyl-adenylate (AcAMP) intermediate. In the second half reaction, it can then transfer the acetyl group from AcAMP to the sulfhydryl group of CoA, forming the product AcCoA. The sequence is that of Acetyl-coenzyme A synthetase from Cupriavidus pinatubonensis (strain JMP 134 / LMG 1197) (Cupriavidus necator (strain JMP 134)).